Here is a 1019-residue protein sequence, read N- to C-terminus: Vacuolar membrane protease (1019 aa).

The Cytoplasmic portion of the chain corresponds to 1–69 (MFLEINFYST…DRIPTVVGFR (69 aa)). A helical transmembrane segment spans residues 70–90 (VIPTTVLVLLTYLTIFTLVIV). Topologically, residues 91–404 (TDWLPEPPKN…AELVIFYLND (314 aa)) are vacuolar. N-linked (GlcNAc...) asparagine glycosylation is present at Asn158. The Zn(2+) site is built by His195 and Asp207. The Proton acceptor role is filled by Glu239. Glu240 contributes to the Zn(2+) binding site. The N-linked (GlcNAc...) asparagine glycan is linked to Asn256. 2 residues coordinate Zn(2+): Glu265 and His341. The chain crosses the membrane as a helical span at residues 405–425 (LLIYNVVSLVVGPISLIFFVV). Residues 426-466 (CEYVLRNERARQPNGHPVSRPSVLEWLKQRSWLRALWRRSK) are Cytoplasmic-facing. Residues 467 to 487 (FWIALVITIALQALLVWGYLA) traverse the membrane as a helical segment. Topologically, residues 488–497 (FNSFTVYSSP) are vacuolar. A helical membrane pass occupies residues 498-518 (YLVLISFFSLAYLSLVIPLTF). At 519–539 (TFNQTQSPTAKYIAPEREKHT) the chain is on the cytoplasmic side. The chain crosses the membrane as a helical span at residues 540–560 (LLIQVYIFTWILLLFSTIAVA). Residues 561–565 (RAQVG) lie on the Vacuolar side of the membrane. Residues 566–586 (GLYFVTAWNTGVWIACLLAAV) form a helical membrane-spanning segment. The Cytoplasmic segment spans residues 587–651 (EGMMLPVPQG…ASLRKPQEGG (65 aa)). Residues 603–634 (HSAHHHHHHEHEEDQDADDDDREQRQPPTEAT) are disordered. The chain crosses the membrane as a helical span at residues 652-672 (VVGWWIVHLLLTIPAPVLLIA). Topologically, residues 673–692 (QMGSLLLDSLPQTLADGSPA) are vacuolar. The helical transmembrane segment at 693-713 (YVVYAAASLTAVLLAVPLTPF) threads the bilayer. Residues 714-719 (SGKLHR) are Cytoplasmic-facing. A helical transmembrane segment spans residues 720-740 (GLFFLFFLSFLIVTAYLWLAF). The Vacuolar portion of the chain corresponds to 741-1019 (PFSSADPLKV…LVEAWSPFSV (279 aa)). Residue Asn774 is glycosylated (N-linked (GlcNAc...) asparagine).

This sequence belongs to the peptidase M28 family. It depends on Zn(2+) as a cofactor.

The protein localises to the vacuole membrane. Functionally, may be involved in vacuolar sorting and osmoregulation. This chain is Vacuolar membrane protease, found in Laccaria bicolor (strain S238N-H82 / ATCC MYA-4686) (Bicoloured deceiver).